The sequence spans 24 residues: Glutathione S-transferase (24 aa).

The protein belongs to the GST superfamily. Monomer and homodimer.

The protein localises to the cytoplasm. The enzyme catalyses RX + glutathione = an S-substituted glutathione + a halide anion + H(+). Conjugation of reduced glutathione to a wide number of exogenous and endogenous hydrophobic electrophiles. This is Glutathione S-transferase from Pseudomonas sp. (strain CF600).